A 1412-amino-acid polypeptide reads, in one-letter code: DNA-directed RNA polymerase subunit beta' (1412 aa).

Positions 70, 72, 85, and 88 each coordinate Zn(2+). 3 residues coordinate Mg(2+): aspartate 460, aspartate 462, and aspartate 464. Zn(2+)-binding residues include cysteine 819, cysteine 893, cysteine 900, and cysteine 903. The segment at 1391–1412 is disordered; that stretch reads AEESFEFGTPETPAAEQQHSGE.

It belongs to the RNA polymerase beta' chain family. In terms of assembly, the RNAP catalytic core consists of 2 alpha, 1 beta, 1 beta' and 1 omega subunit. When a sigma factor is associated with the core the holoenzyme is formed, which can initiate transcription. Mg(2+) serves as cofactor. It depends on Zn(2+) as a cofactor.

It carries out the reaction RNA(n) + a ribonucleoside 5'-triphosphate = RNA(n+1) + diphosphate. DNA-dependent RNA polymerase catalyzes the transcription of DNA into RNA using the four ribonucleoside triphosphates as substrates. The protein is DNA-directed RNA polymerase subunit beta' of Paraburkholderia xenovorans (strain LB400).